Reading from the N-terminus, the 253-residue chain is Adenylate kinase (253 aa).

15–20 (GSGKGT) provides a ligand contact to ATP. The NMP stretch occupies residues 35 to 64 (SSGDLLRNAVSQNTPLGQEIKSYLDQGKLL). AMP-binding positions include Ser36, Arg41, 62 to 64 (KLL), 103 to 106 (GFPR), and Gln110. An LID region spans residues 143–176 (SRYICPSCQGIYNKQQGFSRCPKCLVELTRRSDD). Residue Arg144 participates in ATP binding. Positions 147 and 150 each coordinate Zn(2+). 153 to 154 (IY) contacts ATP. Zn(2+) is bound by residues Cys163 and Cys166. AMP contacts are provided by Arg173 and Arg184. Ala212 is a binding site for ATP.

The protein belongs to the adenylate kinase family. Monomer.

It is found in the cytoplasm. It carries out the reaction AMP + ATP = 2 ADP. Its pathway is purine metabolism; AMP biosynthesis via salvage pathway; AMP from ADP: step 1/1. In terms of biological role, catalyzes the reversible transfer of the terminal phosphate group between ATP and AMP. Plays an important role in cellular energy homeostasis and in adenine nucleotide metabolism. In Chlamydia muridarum (strain MoPn / Nigg), this protein is Adenylate kinase.